A 341-amino-acid chain; its full sequence is Aspartate carbamoyltransferase catalytic subunit (341 aa).

Residues arginine 74 and threonine 75 each coordinate carbamoyl phosphate. Lysine 102 is a binding site for L-aspartate. The carbamoyl phosphate site is built by arginine 124, histidine 152, and glutamine 155. L-aspartate-binding residues include arginine 190 and arginine 244. 2 residues coordinate carbamoyl phosphate: glycine 285 and proline 286.

The protein belongs to the aspartate/ornithine carbamoyltransferase superfamily. ATCase family. In terms of assembly, heterododecamer (2C3:3R2) of six catalytic PyrB chains organized as two trimers (C3), and six regulatory PyrI chains organized as three dimers (R2).

The enzyme catalyses carbamoyl phosphate + L-aspartate = N-carbamoyl-L-aspartate + phosphate + H(+). Its pathway is pyrimidine metabolism; UMP biosynthesis via de novo pathway; (S)-dihydroorotate from bicarbonate: step 2/3. Catalyzes the condensation of carbamoyl phosphate and aspartate to form carbamoyl aspartate and inorganic phosphate, the committed step in the de novo pyrimidine nucleotide biosynthesis pathway. In Novosphingobium aromaticivorans (strain ATCC 700278 / DSM 12444 / CCUG 56034 / CIP 105152 / NBRC 16084 / F199), this protein is Aspartate carbamoyltransferase catalytic subunit.